The sequence spans 1654 residues: Mediator of RNA polymerase II transcription subunit 12 (1654 aa).

2 disordered regions span residues 52-72 (DLNGDNSRSQHTAGSGVLSGN) and 1481-1530 (SKQT…SFQT). A compositionally biased stretch (polar residues) spans 1515-1530 (PLSSARPSSEAASFQT).

It belongs to the Mediator complex subunit 12 family. Component of the SRB8-11 complex, which itself associates with the Mediator complex.

It is found in the nucleus. In terms of biological role, component of the SRB8-11 complex. The SRB8-11 complex is a regulatory module of the Mediator complex which is itself involved in regulation of basal and activated RNA polymerase II-dependent transcription. The SRB8-11 complex may be involved in the transcriptional repression of a subset of genes regulated by Mediator. It may inhibit the association of the Mediator complex with RNA polymerase II to form the holoenzyme complex. The sequence is that of Mediator of RNA polymerase II transcription subunit 12 (SRB8) from Scheffersomyces stipitis (strain ATCC 58785 / CBS 6054 / NBRC 10063 / NRRL Y-11545) (Yeast).